The primary structure comprises 850 residues: DEAD-box ATP-dependent RNA helicase 26 (850 aa).

Disordered regions lie at residues 60–82 (TRPE…IRAS) and 106–350 (GKFT…ENDE). Residues 61–71 (RPERSQPEFAR) show a composition bias toward basic and acidic residues. Threonine 109 carries the phosphothreonine modification. Phosphoserine is present on serine 110. Basic and acidic residues-rich tracts occupy residues 118–140 (EVVR…EGQS) and 284–299 (GRND…REPG). Acidic residues-rich tracts occupy residues 315–325 (LEEEDSSDDDE) and 336–350 (LPSE…ENDE). The Q motif signature appears at 382–410 (TRFDQFPLSPLSLKAIKDAGFETMTVVQE). In terms of domain architecture, Helicase ATP-binding spans 413–596 (LPIILQGKDV…HVALKRDHEF (184 aa)). Residue 426–433 (AKTGTGKT) coordinates ATP. Positions 544-547 (DEAD) match the DEAD box motif. Residues 630–777 (LLKEHIADNV…IDPEAVKRVQ (148 aa)) form the Helicase C-terminal domain.

The protein belongs to the DEAD box helicase family.

It catalyses the reaction ATP + H2O = ADP + phosphate + H(+). The polypeptide is DEAD-box ATP-dependent RNA helicase 26 (RH26) (Arabidopsis thaliana (Mouse-ear cress)).